A 386-amino-acid polypeptide reads, in one-letter code: Hydrazine synthase subunit beta (386 aa).

An N-terminal signal peptide occupies residues 1–34 (MVIRRKMNKMIRKGMIGAVMLGAAVAISGGVATA).

As to quaternary structure, part of the hydrazine synthase complex that forms an elongated dimer of heterotrimers composed of one alpha, one beta and one gamma subunit.

Its subcellular location is the anammoxosome. Its pathway is nitrogen metabolism. Its function is as follows. Component of the hydrazine synthase complex that catalyzes the condensation of nitric oxide (NO) with ammonium to form hydrazine. The beta subunit may play a role in modulating transport of the hydroxylamine intermediate through a tunnel between the gamma and alpha subunit's active site. Is involved in anaerobic ammonium oxidation (anammox), a biological process in which nitrite is used as the electron acceptor in the conversion of ammonium to dinitrogen gas (N2) and water; this bacterial process has a major role in the Earth's nitrogen cycle and has been estimated to synthesize up to 50% of the dinitrogen gas emitted into our atmosphere from the oceans. The sequence is that of Hydrazine synthase subunit beta from Kuenenia stuttgartiensis.